The primary structure comprises 427 residues: Gamma-glutamyl phosphate reductase (427 aa).

Belongs to the gamma-glutamyl phosphate reductase family.

It localises to the cytoplasm. The enzyme catalyses L-glutamate 5-semialdehyde + phosphate + NADP(+) = L-glutamyl 5-phosphate + NADPH + H(+). The protein operates within amino-acid biosynthesis; L-proline biosynthesis; L-glutamate 5-semialdehyde from L-glutamate: step 2/2. In terms of biological role, catalyzes the NADPH-dependent reduction of L-glutamate 5-phosphate into L-glutamate 5-semialdehyde and phosphate. The product spontaneously undergoes cyclization to form 1-pyrroline-5-carboxylate. This Rhizobium rhizogenes (strain K84 / ATCC BAA-868) (Agrobacterium radiobacter) protein is Gamma-glutamyl phosphate reductase.